Consider the following 208-residue polypeptide: ATP-dependent Clp protease proteolytic subunit (208 aa).

The active-site Nucleophile is the S105. Residue H130 is part of the active site.

The protein belongs to the peptidase S14 family. In terms of assembly, fourteen ClpP subunits assemble into 2 heptameric rings which stack back to back to give a disk-like structure with a central cavity, resembling the structure of eukaryotic proteasomes.

It localises to the cytoplasm. It catalyses the reaction Hydrolysis of proteins to small peptides in the presence of ATP and magnesium. alpha-casein is the usual test substrate. In the absence of ATP, only oligopeptides shorter than five residues are hydrolyzed (such as succinyl-Leu-Tyr-|-NHMec, and Leu-Tyr-Leu-|-Tyr-Trp, in which cleavage of the -Tyr-|-Leu- and -Tyr-|-Trp bonds also occurs).. Its function is as follows. Cleaves peptides in various proteins in a process that requires ATP hydrolysis. Has a chymotrypsin-like activity. Plays a major role in the degradation of misfolded proteins. In Xanthomonas campestris pv. campestris (strain 8004), this protein is ATP-dependent Clp protease proteolytic subunit.